The following is a 40-amino-acid chain: Beta/delta-ctenitoxin-Pr1a (40 aa).

4 disulfide bridges follow: Cys-1-Cys-15, Cys-8-Cys-21, Cys-14-Cys-31, and Cys-23-Cys-29.

The protein belongs to the neurotoxin 03 (Tx2) family. 05 subfamily. In terms of tissue distribution, expressed by the venom gland.

It localises to the secreted. Its function is as follows. Potent insecticidal toxin that binds to two distinct sites in insect sodium channels, with close affinity (Kd1=34.7 pM and Kd2=35.1 pM). Its association is rather fast (1.4 and 8.5 minutes, respectively for sites 1 and 2) and its dissociation is a slower process (5.4 and 32.8 minutes, respectively). On rat brain synaptosomes the toxin partially competes (~30%) with the beta-toxin CssIV, but does not compete with the alpha-toxin AaII, nor with the beta-toxin Ts VII. On cockroach nerve cord synaptosomes, the toxin does not compete with the anti-insect toxin LqqIT1, but it competes with the 'alpha-like' toxin BomIV (IC(50)=80 pM). In cockroach neurons, the toxin inhibits the inactivation of sodium channels and it shifts the sodium channel activation to hyperpolarizing potentials. Hence, it behaves like an 'alpha-like' toxin and binds preferentially to site 3 on the insect Nav channel, located on the domain IV. The toxin may also inhibit the N-methyl-D-aspartate (NMDA)-subtype of ionotropic glutamate receptor (GRIN). In vivo, the toxin causes excitatory effects on insects. The sequence is that of Beta/delta-ctenitoxin-Pr1a from Phoneutria reidyi (Brazilian Amazonian armed spider).